Consider the following 284-residue polypeptide: Asialoglycoprotein receptor 1 (284 aa).

The span at M1 to H18 shows a compositional bias: basic and acidic residues. The segment at M1–P25 is disordered. Over M1–R39 the chain is Cytoplasmic. Residues Y5 to F8 carry the Endocytosis signal motif. A lipid anchor (S-palmitoyl cysteine) is attached at C35. A helical; Signal-anchor for type II membrane protein membrane pass occupies residues L40–S60. Residues T59–E117 are a coiled coil. Topologically, residues Q61–N284 are extracellular. 3 N-linked (GlcNAc...) asparagine glycosylation sites follow: N75, N78, and N146. Intrachain disulfides connect C153/C164, C181/C276, and C254/C268. Residues Y160–E277 form the C-type lectin domain. The Ca(2+) site is built by V190, E196, D215, Q239, D241, E252, D253, N264, D265, and E277.

In terms of assembly, interacts with LASS2. In terms of processing, phosphorylated on a cytoplasmic Ser residue. As to expression, expressed exclusively in hepatic parenchymal cells.

The protein localises to the membrane. In terms of biological role, mediates the endocytosis of plasma glycoproteins to which the terminal sialic acid residue on their complex carbohydrate moieties has been removed. The receptor recognizes terminal galactose and N-acetylgalactosamine units. After ligand binding to the receptor, the resulting complex is internalized and transported to a sorting organelle, where receptor and ligand are disassociated. The receptor then returns to the cell membrane surface. The polypeptide is Asialoglycoprotein receptor 1 (Asgr1) (Mus musculus (Mouse)).